Here is a 222-residue protein sequence, read N- to C-terminus: UPF0502 protein PBPRB0676 (222 aa).

The protein belongs to the UPF0502 family.

The polypeptide is UPF0502 protein PBPRB0676 (Photobacterium profundum (strain SS9)).